The primary structure comprises 252 residues: RNA-binding protein 7 (252 aa).

Positions 9-86 constitute an RRM domain; sequence RTLFVGNLDP…RQLNIKFKTG (78 aa). Polar residues-rich tracts occupy residues 88 to 107 and 119 to 137; these read SHIN…SPAN and QMGS…PFSS. Disordered regions lie at residues 88 to 137 and 171 to 252; these read SHIN…PFSS and QLRG…WKHF. Composition is skewed to basic and acidic residues over residues 211-230 and 237-252; these read ERNR…DRSG and PPDR…WKHF.

Component of the nuclear exosome targeting (NEXT) complex composed of MTREX, ZCCHC8, and RBM7 that directs a subset of non-coding short-lived RNAs for exosomal degradation.

It is found in the nucleus. The protein localises to the nucleoplasm. Its function is as follows. RNA-binding subunit of the trimeric nuclear exosome targeting (NEXT) complex, a complex that functions as an RNA exosome cofactor that directs a subset of non-coding short-lived RNAs for exosomal degradation. NEXT is involved in surveillance and turnover of aberrant transcripts and non-coding RNAs. Binds preferentially polyuridine sequences and associates with newly synthesized RNAs, including pre-mRNAs and short-lived exosome substrates such as promoter upstream transcripts (PROMPTs), enhancer RNAs (eRNAs), and 3'-extended products from small nuclear RNAs (snRNAs). This Danio rerio (Zebrafish) protein is RNA-binding protein 7.